A 167-amino-acid polypeptide reads, in one-letter code: Ubiquitin-fold modifier-conjugating enzyme 1 (167 aa).

Residue cysteine 116 is the Glycyl thioester intermediate of the active site. Residue lysine 122 forms a Glycyl lysine isopeptide (Lys-Gly) (interchain with G-Cter in UFM1) linkage.

The protein belongs to the ubiquitin-conjugating enzyme family. UFC1 subfamily. Interacts with UBA5 (via C-terminus). Interacts with UFL1. Interacts with UFM1. Interacts with KIRREL3. Post-translationally, ufmylated at Lys-122. Deufmylated by UFSP1.

In terms of biological role, E2-like enzyme which specifically catalyzes the second step in ufmylation. Accepts the ubiquitin-like modifier UFM1 from the E1 enzyme UBA5 and forms an intermediate with UFM1 via a thioester linkage. Ufmylation is involved in various processes, such as ribosome recycling, response to DNA damage, interferon response or reticulophagy (also called ER-phagy). The chain is Ubiquitin-fold modifier-conjugating enzyme 1 from Mus musculus (Mouse).